Reading from the N-terminus, the 272-residue chain is Glutamate 5-kinase (272 aa).

Lys-14 lines the ATP pocket. Substrate is bound by residues Ser-54, Asp-141, and Asn-157. Residues 177-178 and 219-225 contribute to the ATP site; these read SD and TGGMLSK.

Belongs to the glutamate 5-kinase family.

It localises to the cytoplasm. It carries out the reaction L-glutamate + ATP = L-glutamyl 5-phosphate + ADP. It functions in the pathway amino-acid biosynthesis; L-proline biosynthesis; L-glutamate 5-semialdehyde from L-glutamate: step 1/2. Catalyzes the transfer of a phosphate group to glutamate to form L-glutamate 5-phosphate. The sequence is that of Glutamate 5-kinase from Streptococcus pyogenes serotype M28 (strain MGAS6180).